A 200-amino-acid polypeptide reads, in one-letter code: NADH-quinone oxidoreductase subunit C (200 aa).

Belongs to the complex I 30 kDa subunit family. NDH-1 is composed of 14 different subunits. Subunits NuoB, C, D, E, F, and G constitute the peripheral sector of the complex.

The protein localises to the cell inner membrane. It catalyses the reaction a quinone + NADH + 5 H(+)(in) = a quinol + NAD(+) + 4 H(+)(out). In terms of biological role, NDH-1 shuttles electrons from NADH, via FMN and iron-sulfur (Fe-S) centers, to quinones in the respiratory chain. The immediate electron acceptor for the enzyme in this species is believed to be ubiquinone. Couples the redox reaction to proton translocation (for every two electrons transferred, four hydrogen ions are translocated across the cytoplasmic membrane), and thus conserves the redox energy in a proton gradient. The protein is NADH-quinone oxidoreductase subunit C of Thiobacillus denitrificans (strain ATCC 25259 / T1).